The primary structure comprises 248 residues: Segregation and condensation protein A (248 aa).

This sequence belongs to the ScpA family. As to quaternary structure, component of a cohesin-like complex composed of ScpA, ScpB and the Smc homodimer, in which ScpA and ScpB bind to the head domain of Smc. The presence of the three proteins is required for the association of the complex with DNA.

The protein resides in the cytoplasm. Its function is as follows. Participates in chromosomal partition during cell division. May act via the formation of a condensin-like complex containing Smc and ScpB that pull DNA away from mid-cell into both cell halves. The protein is Segregation and condensation protein A of Clostridium perfringens (strain SM101 / Type A).